We begin with the raw amino-acid sequence, 224 residues long: Type VII secretion system protein EsaE (224 aa).

In terms of assembly, interacts with EssD.

Its function is as follows. Component of the type VII secretion system (Ess). Plays a role in Esx protein secretion. Plays an essential role in the processing and secretion of EssD. This is Type VII secretion system protein EsaE from Staphylococcus aureus (strain USA300).